A 150-amino-acid chain; its full sequence is D-aminoacyl-tRNA deacylase (150 aa).

Positions 138–139 match the Gly-cisPro motif, important for rejection of L-amino acids motif; the sequence is GP.

The protein belongs to the DTD family. Homodimer.

It localises to the cytoplasm. The catalysed reaction is glycyl-tRNA(Ala) + H2O = tRNA(Ala) + glycine + H(+). The enzyme catalyses a D-aminoacyl-tRNA + H2O = a tRNA + a D-alpha-amino acid + H(+). In terms of biological role, an aminoacyl-tRNA editing enzyme that deacylates mischarged D-aminoacyl-tRNAs. Also deacylates mischarged glycyl-tRNA(Ala), protecting cells against glycine mischarging by AlaRS. Acts via tRNA-based rather than protein-based catalysis; rejects L-amino acids rather than detecting D-amino acids in the active site. By recycling D-aminoacyl-tRNA to D-amino acids and free tRNA molecules, this enzyme counteracts the toxicity associated with the formation of D-aminoacyl-tRNA entities in vivo and helps enforce protein L-homochirality. In Chromobacterium violaceum (strain ATCC 12472 / DSM 30191 / JCM 1249 / CCUG 213 / NBRC 12614 / NCIMB 9131 / NCTC 9757 / MK), this protein is D-aminoacyl-tRNA deacylase.